Reading from the N-terminus, the 232-residue chain is Large ribosomal subunit protein uL1 (232 aa).

It belongs to the universal ribosomal protein uL1 family. As to quaternary structure, part of the 50S ribosomal subunit.

Its function is as follows. Binds directly to 23S rRNA. The L1 stalk is quite mobile in the ribosome, and is involved in E site tRNA release. Protein L1 is also a translational repressor protein, it controls the translation of the L11 operon by binding to its mRNA. The protein is Large ribosomal subunit protein uL1 of Amoebophilus asiaticus (strain 5a2).